The sequence spans 307 residues: UDP-N-acetylenolpyruvoylglucosamine reductase (307 aa).

An FAD-binding PCMH-type domain is found at 33–197 (TGGNADFYIT…LEAAFTLAPG (165 aa)). Arginine 176 is a catalytic residue. Serine 226 (proton donor) is an active-site residue. Residue glutamate 296 is part of the active site.

The protein belongs to the MurB family. Requires FAD as cofactor.

It is found in the cytoplasm. The enzyme catalyses UDP-N-acetyl-alpha-D-muramate + NADP(+) = UDP-N-acetyl-3-O-(1-carboxyvinyl)-alpha-D-glucosamine + NADPH + H(+). It functions in the pathway cell wall biogenesis; peptidoglycan biosynthesis. Cell wall formation. This chain is UDP-N-acetylenolpyruvoylglucosamine reductase, found in Staphylococcus aureus (strain COL).